The chain runs to 107 residues: Pyrimidine/purine nucleoside phosphorylase (107 aa).

The protein belongs to the nucleoside phosphorylase PpnP family.

The catalysed reaction is a purine D-ribonucleoside + phosphate = a purine nucleobase + alpha-D-ribose 1-phosphate. It carries out the reaction adenosine + phosphate = alpha-D-ribose 1-phosphate + adenine. It catalyses the reaction cytidine + phosphate = cytosine + alpha-D-ribose 1-phosphate. The enzyme catalyses guanosine + phosphate = alpha-D-ribose 1-phosphate + guanine. The catalysed reaction is inosine + phosphate = alpha-D-ribose 1-phosphate + hypoxanthine. It carries out the reaction thymidine + phosphate = 2-deoxy-alpha-D-ribose 1-phosphate + thymine. It catalyses the reaction uridine + phosphate = alpha-D-ribose 1-phosphate + uracil. The enzyme catalyses xanthosine + phosphate = alpha-D-ribose 1-phosphate + xanthine. Functionally, catalyzes the phosphorolysis of diverse nucleosides, yielding D-ribose 1-phosphate and the respective free bases. Can use uridine, adenosine, guanosine, cytidine, thymidine, inosine and xanthosine as substrates. Also catalyzes the reverse reactions. This Azoarcus sp. (strain BH72) protein is Pyrimidine/purine nucleoside phosphorylase.